The sequence spans 205 residues: Golgi apparatus membrane protein TVP23 homolog B (205 aa).

Met-1 bears the N-acetylmethionine mark. The span at 1–21 shows a compositional bias: acidic residues; the sequence is MLSQDSNDDTEDVSLFDAEEE. Positions 1-27 are disordered; the sequence is MLSQDSNDDTEDVSLFDAEEETTNRPR. 4 consecutive transmembrane segments (helical) span residues 34 to 53, 54 to 72, 126 to 146, and 152 to 172; these read PVAS…VYLL, CELL…ILLL, IFWL…FSAL, and KWLA…YGYI.

The protein belongs to the TVP23 family.

The protein resides in the membrane. The chain is Golgi apparatus membrane protein TVP23 homolog B (Tvp23b) from Mus musculus (Mouse).